The primary structure comprises 105 residues: Prokineticin-1 (105 aa).

The N-terminal stretch at M1–C19 is a signal peptide. Cystine bridges form between C26–C38, C32–C50, C37–C78, C60–C86, and C80–C96.

Belongs to the AVIT (prokineticin) family. Highly expressed in liver and ovary and weakly expressed in testis and placenta. Expressed in mucosa and mesenchyme of embryonic gut during enteric nervous system development (at protein level). Predominantly expressed in kidney and liver. Also expressed in lung, ovary, placenta and testis. In fetal liver, is restricted to and highly expressed in hepatocytes. In adult kidney, expression is restricted to the endothelial tubule cells. In placenta, expressed throughout gestation.

Its subcellular location is the secreted. In terms of biological role, potently contracts gastrointestinal (GI) smooth muscle. Induces proliferation, migration and fenestration (the formation of membrane discontinuities) in capillary endothelial cells. Induces proliferation and differentiation, but not migration, of enteric neural crest cells. Directly influences neuroblastoma progression by promoting the proliferation and migration of neuroblastoma cells. Positively regulates PTGS2 expression and prostaglandin synthesis. May play a role in placentation. May play a role in normal and pathological testis angiogenesis. The chain is Prokineticin-1 from Mus musculus (Mouse).